A 422-amino-acid polypeptide reads, in one-letter code: Serine hydroxymethyltransferase (422 aa).

120-122 contacts (6S)-5,6,7,8-tetrahydrofolate; sequence GHI. N6-(pyridoxal phosphate)lysine is present on K226. Position 241 (E241) interacts with (6S)-5,6,7,8-tetrahydrofolate.

It belongs to the SHMT family. As to quaternary structure, homodimer. The cofactor is pyridoxal 5'-phosphate.

Its subcellular location is the cytoplasm. The catalysed reaction is 5,10-methylenetetrahydromethanopterin + glycine + H2O = 5,6,7,8-tetrahydromethanopterin + L-serine. The protein operates within amino-acid biosynthesis; glycine biosynthesis; glycine from L-serine: step 1/1. Catalyzes the reversible interconversion of serine and glycine with tetrahydromethanopterin (H4MPT) serving as the one-carbon carrier. Also exhibits a pteridine-independent aldolase activity toward beta-hydroxyamino acids, producing glycine and aldehydes, via a retro-aldol mechanism. This is Serine hydroxymethyltransferase from Methanosphaera stadtmanae (strain ATCC 43021 / DSM 3091 / JCM 11832 / MCB-3).